A 184-amino-acid polypeptide reads, in one-letter code: ATP synthase subunit b, chloroplastic (184 aa).

The chain crosses the membrane as a helical span at residues 27 to 49 (LATNPINLSVVLGVLIFFGKGVL).

Belongs to the ATPase B chain family. In terms of assembly, F-type ATPases have 2 components, F(1) - the catalytic core - and F(0) - the membrane proton channel. F(1) has five subunits: alpha(3), beta(3), gamma(1), delta(1), epsilon(1). F(0) has four main subunits: a(1), b(1), b'(1) and c(10-14). The alpha and beta chains form an alternating ring which encloses part of the gamma chain. F(1) is attached to F(0) by a central stalk formed by the gamma and epsilon chains, while a peripheral stalk is formed by the delta, b and b' chains.

The protein localises to the plastid. It is found in the chloroplast thylakoid membrane. Its function is as follows. F(1)F(0) ATP synthase produces ATP from ADP in the presence of a proton or sodium gradient. F-type ATPases consist of two structural domains, F(1) containing the extramembraneous catalytic core and F(0) containing the membrane proton channel, linked together by a central stalk and a peripheral stalk. During catalysis, ATP synthesis in the catalytic domain of F(1) is coupled via a rotary mechanism of the central stalk subunits to proton translocation. Component of the F(0) channel, it forms part of the peripheral stalk, linking F(1) to F(0). In Carica papaya (Papaya), this protein is ATP synthase subunit b, chloroplastic.